Here is a 60-residue protein sequence, read N- to C-terminus: Large ribosomal subunit protein bL32 (60 aa).

Residues Met1–Thr23 form a disordered region. Residues His7 to Tyr20 show a composition bias toward basic residues.

This sequence belongs to the bacterial ribosomal protein bL32 family.

This Streptococcus equi subsp. equi (strain 4047) protein is Large ribosomal subunit protein bL32.